We begin with the raw amino-acid sequence, 179 residues long: uncharacterized protein (179 aa).

The segment at S53 to E82 is disordered. Basic and acidic residues predominate over residues P54–D67.

This is an uncharacterized protein from Ictaluridae (bullhead catfishes).